A 459-amino-acid polypeptide reads, in one-letter code: Argininosuccinate lyase (459 aa).

The protein belongs to the lyase 1 family. Argininosuccinate lyase subfamily.

The protein resides in the cytoplasm. The enzyme catalyses 2-(N(omega)-L-arginino)succinate = fumarate + L-arginine. The protein operates within amino-acid biosynthesis; L-arginine biosynthesis; L-arginine from L-ornithine and carbamoyl phosphate: step 3/3. This is Argininosuccinate lyase from Sulfurihydrogenibium sp. (strain YO3AOP1).